Here is a 375-residue protein sequence, read N- to C-terminus: MTTRQRLSAERSQQLTRLLTITKTANMRALMEASELAKVIALVAVDIGKSDEMARAFPVLWPKISPQQEYYATAVDWFTNPDETVTSFDVVDMLDAGTSLDQDFMTYLKCLTELHKRRRKYGLILQRQPLPTMVQVSPRALMEYGPDFPPEALASWLTWRKFFYDLDNRSAQETGYLFEPILAAAIGGEAKSARERVVRRTDDPTKGRQVDCWKVLPDGTPLAYELKLRVTIAASGQGRFGEELSFARDCSSSGAKPILVVLDPTENDKLTGLQAAYREVGGAAYVGDAAWAHLEDEAGATMASFIERYVRVPVASVSSFERVIEGDATKRSLILQDLQARLDGNELTISLGGHQRLVERHEDQSLAADGDDDSE.

It catalyses the reaction Endonucleolytic cleavage of DNA to give specific double-stranded fragments with terminal 5'-phosphates.. Functionally, a subtype P restriction enzyme that recognizes the double-stranded sequence 5'-GTGCAC-3' and cleaves after G-1. This is Type II restriction enzyme ApaLI from Acetobacter pasteurianus (Acetobacter turbidans).